A 160-amino-acid polypeptide reads, in one-letter code: Ribosome maturation factor RimP (160 aa).

It belongs to the RimP family.

Its subcellular location is the cytoplasm. Required for maturation of 30S ribosomal subunits. This is Ribosome maturation factor RimP from Orientia tsutsugamushi (strain Boryong) (Rickettsia tsutsugamushi).